A 551-amino-acid polypeptide reads, in one-letter code: MLEFAVSAPFDPAADISAGIIPAQFPWLSLSILFPIVGSLMVPFIPDQGDGRQVRWFALGIALTTFLITVAAYLNGYDPSFSGLQLSERVSWLPNLGLTWAVGADGLSMPLILLTSFITTLAVLAAWPVTFKPKLFFFLMLAMDGGQIAVFAVQDMLLFFLAWELELLPVYLLLAIWGGKKRQYAATKFILYTAGSSLFILLAALAMGFMGGGTPNFEYAVLAQKGFSTSFQLLCYAGLLIAFGVKLPIVPLHTWLPDAHGEATAPVHMLLAGILLKMGGYALMRFNAEMLPDAHAQFAPLLVVLGVVNIIYAALTSFAQRNLKRKIAYSSISHMGFVLIGIGSFSALGTSGAMLQMISHGLIGASLFFLVGATYDRTHTLQLDEMGGVGQKMRIMFALWTVCSLASLALPGMSGFVSELMVFTGFATDEAYTLTFRIVIDGLAAVGVILTPIYLLSMLREIFFGKENVQLASNTNLVDAEPREVYIIGCLLVPIIGIGLYPRLMTDSYRTAIEALVDRDVAAMETISRPTAPLIRNPSLAPALLQAPKLP.

The next 14 helical transmembrane spans lie at phenylalanine 25 to isoleucine 45, tryptophan 56 to glycine 76, leucine 111 to phenylalanine 131, proline 133 to valine 153, leucine 157 to tryptophan 177, phenylalanine 189 to phenylalanine 209, leucine 233 to histidine 253, threonine 264 to methionine 284, phenylalanine 298 to phenylalanine 318, methionine 335 to leucine 355, glutamine 356 to aspartate 376, phenylalanine 397 to valine 417, isoleucine 438 to methionine 458, and valine 485 to methionine 505.

It belongs to the complex I subunit 4 family.

Its subcellular location is the cellular thylakoid membrane. The catalysed reaction is a plastoquinone + NADH + (n+1) H(+)(in) = a plastoquinol + NAD(+) + n H(+)(out). It carries out the reaction a plastoquinone + NADPH + (n+1) H(+)(in) = a plastoquinol + NADP(+) + n H(+)(out). Its function is as follows. NDH-1 shuttles electrons from NAD(P)H, via FMN and iron-sulfur (Fe-S) centers, to quinones in the respiratory chain. The immediate electron acceptor for the enzyme in this species is believed to be plastoquinone. Couples the redox reaction to proton translocation (for every two electrons transferred, four hydrogen ions are translocated across the cytoplasmic membrane), and thus conserves the redox energy in a proton gradient. In Synechococcus sp. (strain WH7803), this protein is NAD(P)H-quinone oxidoreductase chain 4.